Here is a 102-residue protein sequence, read N- to C-terminus: Small ribosomal subunit protein uS10 (102 aa).

Belongs to the universal ribosomal protein uS10 family. As to quaternary structure, part of the 30S ribosomal subunit.

In terms of biological role, involved in the binding of tRNA to the ribosomes. The polypeptide is Small ribosomal subunit protein uS10 (Streptococcus mutans serotype c (strain ATCC 700610 / UA159)).